Here is a 206-residue protein sequence, read N- to C-terminus: Ribosomal RNA large subunit methyltransferase E (206 aa).

Residues glycine 61, tryptophan 63, aspartate 81, aspartate 97, and aspartate 122 each coordinate S-adenosyl-L-methionine. Lysine 162 serves as the catalytic Proton acceptor.

Belongs to the class I-like SAM-binding methyltransferase superfamily. RNA methyltransferase RlmE family.

Its subcellular location is the cytoplasm. It catalyses the reaction uridine(2552) in 23S rRNA + S-adenosyl-L-methionine = 2'-O-methyluridine(2552) in 23S rRNA + S-adenosyl-L-homocysteine + H(+). Specifically methylates the uridine in position 2552 of 23S rRNA at the 2'-O position of the ribose in the fully assembled 50S ribosomal subunit. In Neisseria gonorrhoeae (strain NCCP11945), this protein is Ribosomal RNA large subunit methyltransferase E.